The chain runs to 431 residues: Divalent metal cation transporter MntH (431 aa).

The next 11 membrane-spanning stretches (helical) occupy residues 33 to 53, 61 to 81, 110 to 130, 141 to 161, 170 to 190, 211 to 231, 258 to 278, 307 to 327, 347 to 367, 368 to 388, and 406 to 426; these read LLKF…PGNF, SSFN…AIFL, WIFW…EFIG, IPMI…VYME, TIIA…LFLA, AVLI…IYLH, ILIA…VSAA, GAFG…GTMA, IITM…MRVL, VLSQ…MLLI, and IVGF…LYLT.

Belongs to the NRAMP family.

The protein localises to the cell membrane. In terms of biological role, h(+)-stimulated, divalent metal cation uptake system. The polypeptide is Divalent metal cation transporter MntH (Clostridium acetobutylicum (strain ATCC 824 / DSM 792 / JCM 1419 / IAM 19013 / LMG 5710 / NBRC 13948 / NRRL B-527 / VKM B-1787 / 2291 / W)).